The following is a 396-amino-acid chain: Phosphoglycerate kinase (396 aa).

Substrate-binding positions include 21 to 23 (DFN), R36, 59 to 62 (HLGK), R119, and R156. ATP contacts are provided by residues K206, G294, E325, and 352 to 355 (GGDS).

This sequence belongs to the phosphoglycerate kinase family. As to quaternary structure, monomer.

The protein localises to the cytoplasm. It catalyses the reaction (2R)-3-phosphoglycerate + ATP = (2R)-3-phospho-glyceroyl phosphate + ADP. The protein operates within carbohydrate degradation; glycolysis; pyruvate from D-glyceraldehyde 3-phosphate: step 2/5. This is Phosphoglycerate kinase from Listeria monocytogenes serotype 4a (strain HCC23).